We begin with the raw amino-acid sequence, 916 residues long: DNA mismatch repair protein MutS (916 aa).

665 to 672 is an ATP binding site; that stretch reads GPNMAGKS.

Belongs to the DNA mismatch repair MutS family.

In terms of biological role, this protein is involved in the repair of mismatches in DNA. It is possible that it carries out the mismatch recognition step. This protein has a weak ATPase activity. This is DNA mismatch repair protein MutS from Bradyrhizobium sp. (strain ORS 278).